Reading from the N-terminus, the 208-residue chain is Transmembrane protein 222 (208 aa).

The interval 1–26 (MAEAEGSSLLLLPPPPPPPRMAEVEA) is disordered. The Extracellular portion of the chain corresponds to 1 to 55 (MAEAEGSSLLLLPPPPPPPRMAEVEAPTAAETDMKQYQGSGGVAMDVERSRFPYC). The chain crosses the membrane as a helical span at residues 56–76 (VVWTPIPVLTWFFPIIGHMGI). The Cytoplasmic portion of the chain corresponds to 77–164 (CTSTGVIRDF…MRYNNSTNWN (88 aa)). A helical membrane pass occupies residues 165–185 (MVTLCFFCLLYGKYVSVGAFV). A topological domain (extracellular) is located at residue Lys186. A helical transmembrane segment spans residues 187 to 207 (TWLPFILLLGIILTVSLVFNL). Residue Arg208 is a topological domain, cytoplasmic.

As to expression, widely expressed. The highest expression is observed in the brain.

The protein localises to the membrane. The protein resides in the cell projection. Its subcellular location is the dendrite. In Homo sapiens (Human), this protein is Transmembrane protein 222 (TMEM222).